We begin with the raw amino-acid sequence, 165 residues long: Methylated-DNA--protein-cysteine methyltransferase (165 aa).

C126 acts as the Nucleophile; methyl group acceptor in catalysis.

Belongs to the MGMT family.

It is found in the cytoplasm. It catalyses the reaction a 6-O-methyl-2'-deoxyguanosine in DNA + L-cysteinyl-[protein] = S-methyl-L-cysteinyl-[protein] + a 2'-deoxyguanosine in DNA. The catalysed reaction is a 4-O-methyl-thymidine in DNA + L-cysteinyl-[protein] = a thymidine in DNA + S-methyl-L-cysteinyl-[protein]. In terms of biological role, involved in the cellular defense against the biological effects of O6-methylguanine (O6-MeG) and O4-methylthymine (O4-MeT) in DNA. Repairs the methylated nucleobase in DNA by stoichiometrically transferring the methyl group to a cysteine residue in the enzyme. This is a suicide reaction: the enzyme is irreversibly inactivated. The chain is Methylated-DNA--protein-cysteine methyltransferase from Mycobacterium leprae (strain TN).